The sequence spans 847 residues: Protein SEY1 (847 aa).

Topologically, residues 1–720 are cytoplasmic; sequence MSSGEPLSET…KRSIVQHVTQ (720 aa). One can recognise a GB1/RHD3-type G domain in the interval 55–290; that stretch reads GHNYHIVAVF…VENDIFKPEY (236 aa). Residue 65 to 72 coordinates GTP; it reads GSQSTGKS. The helical transmembrane segment at 721 to 741 threads the bilayer; the sequence is IPYYIYIIILLLGWNEFMAVV. Topologically, residues 742 to 744 are lumenal; it reads RNP. Residues 745–765 traverse the membrane as a helical segment; it reads FTFSLAIILGASLYILYTMNL. Topologically, residues 766–847 are cytoplasmic; it reads LKPALTVTQR…VTSLNVVEEE (82 aa).

Belongs to the TRAFAC class dynamin-like GTPase superfamily. GB1/RHD3 GTPase family. RHD3 subfamily.

It is found in the endoplasmic reticulum membrane. In terms of biological role, cooperates with the reticulon proteins and tubule-shaping DP1 family proteins to generate and maintain the structure of the tubular endoplasmic reticulum network. Has GTPase activity, which is required for its function in ER organization. The polypeptide is Protein SEY1 (Lodderomyces elongisporus (strain ATCC 11503 / CBS 2605 / JCM 1781 / NBRC 1676 / NRRL YB-4239) (Yeast)).